The sequence spans 141 residues: Large ribosomal subunit protein uL11 (141 aa).

The protein belongs to the universal ribosomal protein uL11 family. As to quaternary structure, part of the ribosomal stalk of the 50S ribosomal subunit. Interacts with L10 and the large rRNA to form the base of the stalk. L10 forms an elongated spine to which L12 dimers bind in a sequential fashion forming a multimeric L10(L12)X complex. In terms of processing, one or more lysine residues are methylated.

Functionally, forms part of the ribosomal stalk which helps the ribosome interact with GTP-bound translation factors. This chain is Large ribosomal subunit protein uL11, found in Streptococcus pneumoniae serotype 2 (strain D39 / NCTC 7466).